A 310-amino-acid polypeptide reads, in one-letter code: N-acetyl-gamma-glutamyl-phosphate reductase (310 aa).

The active site involves cysteine 117.

The protein belongs to the NAGSA dehydrogenase family. Type 2 subfamily.

It localises to the cytoplasm. The catalysed reaction is N-acetyl-L-glutamate 5-semialdehyde + phosphate + NADP(+) = N-acetyl-L-glutamyl 5-phosphate + NADPH + H(+). The protein operates within amino-acid biosynthesis; L-arginine biosynthesis; N(2)-acetyl-L-ornithine from L-glutamate: step 3/4. Its function is as follows. Catalyzes the NADPH-dependent reduction of N-acetyl-5-glutamyl phosphate to yield N-acetyl-L-glutamate 5-semialdehyde. This is N-acetyl-gamma-glutamyl-phosphate reductase from Rhizobium rhizogenes (strain K84 / ATCC BAA-868) (Agrobacterium radiobacter).